Here is an 874-residue protein sequence, read N- to C-terminus: MAQTVRECSLALLFLFMWLLIKANIDVCKLGTVTVQPAPVIPLGSAANISCSLNPKQGCSHYPSSNELILLKFVNDVLVENLHGKKVHDHTGHSSTFQVTNLSLGMTLFVCKLNCSNSQKKPPVPVCGVEISVGVAPEPPQNISCVQEGENGTVACSWNSGKVTYLKTNYTLQLSGPNNLTCQKQCFSDNRQNCNRLDLGINLSPDLAESRFIVRVTAINDLGNSSSLPHTFTFLDIVIPLPPWDIRINFLNASGSRGTLQWEDEGQVVLNQLRYQPLNSTSWNMVNATNAKGKYDLRDLRPFTEYEFQISSKLHLSGGSWSNWSESLRTRTPEEEPVGILDIWYMKQDIDYDRQQISLFWKSLNPSEARGKILHYQVTLQEVTKKTTLQNTTRHTSWTRVIPRTGAWTASVSAANSKGASAPTHINIVDLCGTGLLAPHQVSAKSENMDNILVTWQPPKKADSAVREYIVEWRALQPGSITKFPPHWLRIPPDNMSALISENIKPYICYEIRVHALSESQGGCSSIRGDSKHKAPVSGPHITAITEKKERLFISWTHIPFPEQRGCILHYRIYWKERDSTAQPELCEIQYRRSQNSHPISSLQPRVTYVLWMTAVTAAGESPQGNEREFCPQGKANWKAFVISSICIAIITVGTFSIRYFRQKAFTLLSTLKPQWYSRTIPDPANSTWVKKYPILEEKIQLPTDNLLMAWPTPEEPEPLIIHEVLYHMIPVVRQPYYFKRGQGFQGYSTSKQDAMYIANPQATGTLTAETRQLVNLYKVLESRDPDSKLANLTSPLTVTPVNYLPSHEGYLPSNIEDLSPHEADPTDSFDLEHQHISLSIFASSSLRPLIFGGERLTLDRLKMGYDSLMSNEA.

A signal peptide spans 1 to 23 (MAQTVRECSLALLFLFMWLLIKA). At 24–637 (NIDVCKLGTV…REFCPQGKAN (614 aa)) the chain is on the extracellular side. N-linked (GlcNAc...) asparagine glycosylation is found at Asn-48, Asn-101, Asn-114, Asn-142, Asn-151, Asn-169, Asn-179, Asn-224, Asn-252, Asn-279, Asn-287, Asn-323, Asn-391, and Asn-495. 5 consecutive Fibronectin type-III domains span residues 139–237 (PPQN…FLDI), 242–335 (PPWD…TPEE), 336–430 (EPVG…NIVD), 438–530 (APHQ…IRGD), and 536–635 (PVSG…PQGK). The WSXWS motif signature appears at 321-325 (WSNWS). The chain crosses the membrane as a helical span at residues 638–658 (WKAFVISSICIAIITVGTFSI). Residues 659-874 (RYFRQKAFTL…GYDSLMSNEA (216 aa)) lie on the Cytoplasmic side of the membrane. The short motif at 677 to 685 (YSRTIPDPA) is the Box 1 motif element. Tyr-757, Tyr-804, and Tyr-811 each carry phosphotyrosine.

The protein belongs to the type I cytokine receptor family. Type 2 subfamily. In terms of assembly, heterodimer/heterooligomer; disulfide-linked. The functional high affinity IL12 receptor is composed of I12RB1 and IL12RB2. Il12RB2 binds JAK2 (via its N-terminal) through a membrane-proximal region of the cytoplasmic domain. On IL12 stimulation, phosphorylated on C-terminal tyrosine residues. Phosphorylation of any one of Tyr-757, Tyr-804 or Tyr-811 can activate STAT4, IFN-gamma production, and T-cell proliferation. Tyr-811 is the dominant site of cell proliferation. As to expression, expressed in developing T-helper (TH) cells.

Its subcellular location is the membrane. Receptor for interleukin-12. This subunit is the signaling component coupling to the JAK2/STAT4 pathway. Promotes the proliferation of T-cells as well as NK cells. Induces the promotion of T-cells towards the Th1 phenotype by strongly enhancing IFN-gamma production. Can also activate STAT3. The polypeptide is Interleukin-12 receptor subunit beta-2 (Il12rb2) (Mus musculus (Mouse)).